The chain runs to 700 residues: Myb-related protein B (700 aa).

3 consecutive HTH myb-type domains span residues 26-77 (RDSK…LRVL), 78-133 (NPDL…NPEV), and 134-184 (KKSC…KRKV). The H-T-H motif DNA-binding region spans 54 to 77 (WKFLASHFPNRTDQQCQYRWLRVL). K104 participates in a covalent cross-link: Glycyl lysine isopeptide (Lys-Gly) (interchain with G-Cter in SUMO2). 2 DNA-binding regions (H-T-H motif) span residues 106–129 (WTLI…HNHL) and 157–180 (WAEI…NSTI). Residues K194 and K197 each participate in a glycyl lysine isopeptide (Lys-Gly) (interchain with G-Cter in SUMO2) cross-link. 2 disordered regions span residues 212–287 (LQSA…PETS) and 391–412 (PISP…VLKR). Polar residues predominate over residues 213–229 (QSAQPTEGQGSLLTNWP). Position 241 is a phosphoserine (S241). T266 carries the phosphothreonine modification. K275 participates in a covalent cross-link: Glycyl lysine isopeptide (Lys-Gly) (interchain with G-Cter in SUMO2). A phosphoserine mark is found at S282 and S393. Residue K411 forms a Glycyl lysine isopeptide (Lys-Gly) (interchain with G-Cter in SUMO2) linkage. Residues 411 to 417 (KRQRKRR) carry the Nuclear localization signal motif. A phosphothreonine; by CDK2 mark is found at T440 and T444. Residues K447 and K482 each participate in a glycyl lysine isopeptide (Lys-Gly) (interchain with G-Cter in SUMO2) cross-link. A phosphothreonine; by CDK2 mark is found at T487 and T494. K499 is covalently cross-linked (Glycyl lysine isopeptide (Lys-Gly) (interchain with G-Cter in SUMO2)). T505 carries the phosphothreonine modification. K509 participates in a covalent cross-link: Glycyl lysine isopeptide (Lys-Gly) (interchain with G-Cter in SUMO2). T520 bears the Phosphothreonine; by CDK2 mark. Residues K523, K533, and K546 each participate in a glycyl lysine isopeptide (Lys-Gly) (interchain with G-Cter in SUMO2) cross-link. Residues 564-584 (RPEKQKRKPGLRRSPIKKVRK) carry the Bipartite nuclear localization signal motif. Residue S577 is modified to Phosphoserine; by CDK2. Residues K584, K596, K625, K639, and K648 each participate in a glycyl lysine isopeptide (Lys-Gly) (interchain with G-Cter in SUMO2) cross-link.

Component of the DREAM complex (also named LINC complex) at least composed of E2F4, E2F5, LIN9, LIN37, LIN52, LIN54, MYBL1, MYBL2, RBL1, RBL2, RBBP4, TFDP1 and TFDP2. The complex exists in quiescent cells where it represses cell cycle-dependent genes. It dissociates in S phase when LIN9, LIN37, LIN52 and LIN54 form a subcomplex that binds to MYBL22. Interacts with CCNF (via the Cyclin N-terminal domain). Post-translationally, phosphorylated by cyclin A/CDK2 during S-phase. Phosphorylation at Thr-520 is probably involved in transcriptional activity.

It localises to the nucleus. Its function is as follows. Transcription factor involved in the regulation of cell survival, proliferation, and differentiation. Transactivates the expression of the CLU gene. The protein is Myb-related protein B (MYBL2) of Homo sapiens (Human).